The primary structure comprises 681 residues: Pumilio domain-containing protein C6G9.14 (681 aa).

Disordered regions lie at residues 180-210 (RPGL…PGLI) and 273-322 (ASTA…NVPS). Composition is skewed to low complexity over residues 187 to 210 (TPGP…PGLI) and 273 to 286 (ASTA…SSGS). Residues 319 to 659 (NVPSLISDDP…RILSKLERRH (341 aa)) form the PUM-HD domain. Pumilio repeat units lie at residues 342–378 (SLQN…AVFA), 379–414 (ETHP…TFIQ), 415–451 (IIAP…CIVN), 452–487 (ALRP…FIFD), 488–523 (AICE…QLVE), 524–559 (HIVP…AIIS), 560–595 (YFLY…KLIS), and 596–633 (ELMD…ELVE). Residues 656–666 (ERRHPSSKEKP) show a composition bias toward basic and acidic residues. The disordered stretch occupies residues 656 to 681 (ERRHPSSKEKPIVYSNSERVNTSSSA). Positions 669-681 (YSNSERVNTSSSA) are enriched in polar residues.

The protein is Pumilio domain-containing protein C6G9.14 of Schizosaccharomyces pombe (strain 972 / ATCC 24843) (Fission yeast).